The primary structure comprises 423 residues: Gamma-glutamyl phosphate reductase (423 aa).

The protein belongs to the gamma-glutamyl phosphate reductase family.

The protein resides in the cytoplasm. The enzyme catalyses L-glutamate 5-semialdehyde + phosphate + NADP(+) = L-glutamyl 5-phosphate + NADPH + H(+). It participates in amino-acid biosynthesis; L-proline biosynthesis; L-glutamate 5-semialdehyde from L-glutamate: step 2/2. Catalyzes the NADPH-dependent reduction of L-glutamate 5-phosphate into L-glutamate 5-semialdehyde and phosphate. The product spontaneously undergoes cyclization to form 1-pyrroline-5-carboxylate. In Magnetococcus marinus (strain ATCC BAA-1437 / JCM 17883 / MC-1), this protein is Gamma-glutamyl phosphate reductase.